Consider the following 344-residue polypeptide: Methylthioribose-1-phosphate isomerase (344 aa).

Substrate contacts are provided by residues Arg-55–Ala-57, Arg-98, and Gln-202. Catalysis depends on Asp-243, which acts as the Proton donor. Asn-253–Lys-254 provides a ligand contact to substrate.

It belongs to the eIF-2B alpha/beta/delta subunits family. MtnA subfamily.

The enzyme catalyses 5-(methylsulfanyl)-alpha-D-ribose 1-phosphate = 5-(methylsulfanyl)-D-ribulose 1-phosphate. The protein operates within amino-acid biosynthesis; L-methionine biosynthesis via salvage pathway; L-methionine from S-methyl-5-thio-alpha-D-ribose 1-phosphate: step 1/6. In terms of biological role, catalyzes the interconversion of methylthioribose-1-phosphate (MTR-1-P) into methylthioribulose-1-phosphate (MTRu-1-P). This is Methylthioribose-1-phosphate isomerase from Gemmatimonas aurantiaca (strain DSM 14586 / JCM 11422 / NBRC 100505 / T-27).